The sequence spans 668 residues: Lebercilin-like protein (668 aa).

Residues 17 to 44 (SVALENNRRSAECKRSPGTGDFSRNSSA) are disordered. The span at 22 to 31 (NNRRSAECKR) shows a compositional bias: basic and acidic residues. Coiled-coil stretches lie at residues 148–259 (LHKI…EREE) and 305–336 (AAQTATKTLQVEVKHLQQKLKEKDRELEIKNI). The segment at 351–402 (YPKVSSTKSVQADRKSLPFTSMRHQGTQKSDVPPLTTKGKKATGNMNHKEKS) is disordered. Residues 368–380 (PFTSMRHQGTQKS) are compositionally biased toward polar residues. Residues 420–440 (EDSKTKYEDLSREEKHLEVQV) are a coiled coil. 3 disordered regions span residues 495 to 520 (RSMQRNGMDDTPDKCTAPYTKGPLRQ), 533 to 581 (LHHG…FGKS), and 605 to 668 (SGYV…KIII). Polar residues predominate over residues 546–558 (AGNTKYSHSTSKH). Basic and acidic residues-rich tracts occupy residues 560–572 (SNREEMELEHSDS) and 621–632 (GSEEPLQSKESH). Over residues 633–660 (PPSQASASNAFGDSKVTVVNSIKPSSPT) the composition is skewed to polar residues.

It belongs to the LCA5 family.

This is Lebercilin-like protein from Macaca fascicularis (Crab-eating macaque).